Consider the following 85-residue polypeptide: Conotoxin Lt28.4 (85 aa).

An N-terminal signal peptide occupies residues 1–21; that stretch reads MPKLEMMLLVLLILPLCYIDA. A propeptide spanning residues 22-40 is cleaved from the precursor; the sequence is VGPPPPWNMEDEIIEHWQK.

Belongs to the conotoxin D superfamily. Post-translationally, contains 5 disulfide bonds. In terms of tissue distribution, expressed by the venom duct.

The protein resides in the secreted. Functionally, probable neurotoxin. In Conus litteratus (Lettered cone), this protein is Conotoxin Lt28.4.